A 1131-amino-acid polypeptide reads, in one-letter code: RNA2 polyprotein (1131 aa).

Positions 213–236 are disordered; that stretch reads ALRTHPGGPALPPLPPPPPIQKPP. Pro residues predominate over residues 221-234; sequence PALPPLPPPPPIQK.

Belongs to the nepoviruses RNA2 polyprotein family. Specific enzymatic cleavages in vivo by the P1 encoded 3C-like protease yield mature proteins.

It localises to the host cell junction. It is found in the host plasmodesma. The protein resides in the virion. Its function is as follows. Implicated in RNA2 replication. Could also be required for nematode transmission of the virus. Transports viral genome to neighboring plant cells directly through plasmosdesmata, without any budding. The movement protein allows efficient cell to cell propagation, by bypassing the host cell wall barrier. Acts by forming a tubular structure at the host plasmodesmata, enlarging it enough to allow free passage of virion capsids. The sequence is that of RNA2 polyprotein from Vitis vinifera (Grape).